The sequence spans 451 residues: 1,3-beta-glucanosyltransferase PGA4 (451 aa).

Residues 1-18 form the signal peptide; sequence MLFRSLVTYLSLVSSVLS. Tyrosine 81 provides a ligand contact to (1,3-beta-D-glucosyl)n. The N-linked (GlcNAc...) asparagine glycan is linked to asparagine 88. (1,3-beta-D-glucosyl)n-binding positions include 108-116, asparagine 151, glutamate 152, and arginine 198; that span reads NTPHSSITR. Glutamate 152 serves as the catalytic Proton donor. An N-linked (GlcNAc...) asparagine glycan is attached at asparagine 245. The active-site Nucleophile is glutamate 254. Tyrosine 286 contacts (1,3-beta-D-glucosyl)n. The tract at residues 316–336 is disordered; sequence SQFEKTKNPSGDGGYLKSTGG. N-linked (GlcNAc...) asparagine glycans are attached at residues asparagine 347, asparagine 394, and asparagine 422. The segment at 395–427 is disordered; it reads YTSSITASSRASPSQTSQVSSSSATSANSTSSK. Residues 396-426 are compositionally biased toward low complexity; the sequence is TSSITASSRASPSQTSQVSSSSATSANSTSS. Aspartate 430 carries the GPI-anchor amidated aspartate lipid modification. Residues 431-451 constitute a propeptide, removed in mature form; that stretch reads AAVEGAGFLSVIALAAGIALL.

It belongs to the glycosyl hydrolase 72 family. Post-translationally, the GPI-anchor is attached to the protein in the endoplasmic reticulum and serves to target the protein to the cell surface. There, the glucosamine-inositol phospholipid moiety is cleaved off and the GPI-modified mannoprotein is covalently attached via its lipidless GPI glycan remnant to the 1,6-beta-glucan of the outer cell wall layer.

The protein resides in the secreted. It is found in the cell wall. The protein localises to the membrane. Its function is as follows. Splits internally a 1,3-beta-glucan molecule and transfers the newly generated reducing end (the donor) to the non-reducing end of another 1,3-beta-glucan molecule (the acceptor) forming a 1,3-beta linkage, resulting in the elongation of 1,3-beta-glucan chains in the cell wall. Involved in cell wall biosynthesis and morphogenesis. Plays a key role in virulence. This Candida albicans (strain SC5314 / ATCC MYA-2876) (Yeast) protein is 1,3-beta-glucanosyltransferase PGA4 (PGA4).